Reading from the N-terminus, the 375-residue chain is Queuine tRNA-ribosyltransferase (375 aa).

Asp89 serves as the catalytic Proton acceptor. Residues 89–93 (DSGGF), Asp143, Gln187, and Gly214 each bind substrate. Residues 245–251 (GVGKPED) form an RNA binding region. Residue Asp264 is the Nucleophile of the active site. The tract at residues 269-273 (TRNAR) is RNA binding; important for wobble base 34 recognition. 4 residues coordinate Zn(2+): Cys302, Cys304, Cys307, and His333.

The protein belongs to the queuine tRNA-ribosyltransferase family. As to quaternary structure, homodimer. Within each dimer, one monomer is responsible for RNA recognition and catalysis, while the other monomer binds to the replacement base PreQ1. Zn(2+) serves as cofactor.

The catalysed reaction is 7-aminomethyl-7-carbaguanine + guanosine(34) in tRNA = 7-aminomethyl-7-carbaguanosine(34) in tRNA + guanine. Its pathway is tRNA modification; tRNA-queuosine biosynthesis. Catalyzes the base-exchange of a guanine (G) residue with the queuine precursor 7-aminomethyl-7-deazaguanine (PreQ1) at position 34 (anticodon wobble position) in tRNAs with GU(N) anticodons (tRNA-Asp, -Asn, -His and -Tyr). Catalysis occurs through a double-displacement mechanism. The nucleophile active site attacks the C1' of nucleotide 34 to detach the guanine base from the RNA, forming a covalent enzyme-RNA intermediate. The proton acceptor active site deprotonates the incoming PreQ1, allowing a nucleophilic attack on the C1' of the ribose to form the product. After dissociation, two additional enzymatic reactions on the tRNA convert PreQ1 to queuine (Q), resulting in the hypermodified nucleoside queuosine (7-(((4,5-cis-dihydroxy-2-cyclopenten-1-yl)amino)methyl)-7-deazaguanosine). The protein is Queuine tRNA-ribosyltransferase of Photobacterium profundum (strain SS9).